A 395-amino-acid chain; its full sequence is Immediate-early protein ICP-46 (395 aa).

Belongs to the IIV-6 393L family.

This Dryophytes versicolor (chameleon treefrog) protein is Immediate-early protein ICP-46 (ICR489).